We begin with the raw amino-acid sequence, 170 residues long: CDP-archaeol synthase (170 aa).

5 helical membrane passes run 9 to 29 (AFWY…LGGG), 53 to 73 (GFFG…FLLP), 79 to 99 (LGIA…GDLI), 114 to 134 (PAVG…AYPV), and 140 to 160 (GEVL…NIFA).

The protein belongs to the CDP-archaeol synthase family. Requires Mg(2+) as cofactor.

The protein resides in the cell membrane. The enzyme catalyses 2,3-bis-O-(geranylgeranyl)-sn-glycerol 1-phosphate + CTP + H(+) = CDP-2,3-bis-O-(geranylgeranyl)-sn-glycerol + diphosphate. It functions in the pathway membrane lipid metabolism; glycerophospholipid metabolism. In terms of biological role, catalyzes the formation of CDP-2,3-bis-(O-geranylgeranyl)-sn-glycerol (CDP-archaeol) from 2,3-bis-(O-geranylgeranyl)-sn-glycerol 1-phosphate (DGGGP) and CTP. This reaction is the third ether-bond-formation step in the biosynthesis of archaeal membrane lipids. The polypeptide is CDP-archaeol synthase (Pyrococcus horikoshii (strain ATCC 700860 / DSM 12428 / JCM 9974 / NBRC 100139 / OT-3)).